A 322-amino-acid polypeptide reads, in one-letter code: Methionyl-tRNA formyltransferase (322 aa).

Serine 115–proline 118 is a binding site for (6S)-5,6,7,8-tetrahydrofolate.

Belongs to the Fmt family.

The catalysed reaction is L-methionyl-tRNA(fMet) + (6R)-10-formyltetrahydrofolate = N-formyl-L-methionyl-tRNA(fMet) + (6S)-5,6,7,8-tetrahydrofolate + H(+). Attaches a formyl group to the free amino group of methionyl-tRNA(fMet). The formyl group appears to play a dual role in the initiator identity of N-formylmethionyl-tRNA by promoting its recognition by IF2 and preventing the misappropriation of this tRNA by the elongation apparatus. The polypeptide is Methionyl-tRNA formyltransferase (Treponema denticola (strain ATCC 35405 / DSM 14222 / CIP 103919 / JCM 8153 / KCTC 15104)).